A 304-amino-acid polypeptide reads, in one-letter code: Quinolinate synthase (304 aa).

Residues H23 and S40 each contribute to the iminosuccinate site. Residue C85 coordinates [4Fe-4S] cluster. Residues 111-113 (YIN) and S128 contribute to the iminosuccinate site. A [4Fe-4S] cluster-binding site is contributed by C171. Iminosuccinate-binding positions include 197-199 (HPE) and T214. C259 contributes to the [4Fe-4S] cluster binding site.

It belongs to the quinolinate synthase family. Type 2 subfamily. [4Fe-4S] cluster is required as a cofactor.

The protein resides in the cytoplasm. It carries out the reaction iminosuccinate + dihydroxyacetone phosphate = quinolinate + phosphate + 2 H2O + H(+). The protein operates within cofactor biosynthesis; NAD(+) biosynthesis; quinolinate from iminoaspartate: step 1/1. Catalyzes the condensation of iminoaspartate with dihydroxyacetone phosphate to form quinolinate. This is Quinolinate synthase from Clostridioides difficile (strain 630) (Peptoclostridium difficile).